A 608-amino-acid chain; its full sequence is Cytoplasmic dynein 1 intermediate chain 1 (608 aa).

2 stretches are compositionally biased toward basic and acidic residues: residues 1 to 13 (MSDK…ELER) and 20 to 60 (QIRE…RETE). The tract at residues 1-106 (MSDKSDLKAE…SGDLGPLTRR (106 aa)) is disordered. Serine 2 carries the post-translational modification N-acetylserine. Position 50 is a phosphoserine (serine 50). Over residues 70-79 (PEPPLVPTPM) the composition is skewed to pro residues. A compositionally biased stretch (low complexity) spans 80 to 90 (SPSSKSVSTPS). The residue at position 83 (serine 83) is a Phosphoserine. Residue threonine 88 is modified to Phosphothreonine. A phosphoserine mark is found at serine 90, serine 94, and serine 97. An interaction with DYNLT1 region spans residues 110-126 (KLGVSKITQVDFLPREV). Positions 132–184 (ETQTPLATHQSEEDEDDEEMVEPKGDQDSEQENEDKKQEVKEAPPRELTEEEK) are disordered. Threonine 139 bears the Phosphothreonine mark. Residues serine 142 and serine 160 each carry the phosphoserine modification. Residues 165-184 (EDKKQEVKEAPPRELTEEEK) show a composition bias toward basic and acidic residues. WD repeat units lie at residues 248–297 (SKHR…TTPE), 301–341 (HCQS…RTPV), 350–391 (AHTH…TPQE), 400–440 (SKPV…AGIG), 445–490 (GHQG…PLYS), 493–533 (DNAD…EVPT), and 539–578 (EGAS…VPHN). Serine 598 is modified (phosphoserine).

It belongs to the dynein intermediate chain family. In terms of assembly, homodimer. The cytoplasmic dynein 1 complex consists of two catalytic heavy chains (HCs) and a number of non-catalytic subunits presented by intermediate chains (ICs), light intermediate chains (LICs) and light chains (LCs); the composition seems to vary in respect to the IC, LIC and LC composition. The heavy chain homodimer serves as a scaffold for the probable homodimeric assembly of the respective non-catalytic subunits. The ICs and LICs bind directly to the HC dimer and the LCs assemble on the IC dimer. Interacts with DYNC1H1. Interacts with DYNLT1 and DYNLT3. Interacts with DCTN1. Interacts with MCRS1; the interaction is required for the proper distribution of centriolar satellites.

It is found in the cytoplasm. Its subcellular location is the chromosome. It localises to the centromere. The protein resides in the kinetochore. The protein localises to the cytoskeleton. It is found in the spindle pole. Functionally, acts as one of several non-catalytic accessory components of the cytoplasmic dynein 1 complex that are thought to be involved in linking dynein to cargos and to adapter proteins that regulate dynein function. Cytoplasmic dynein 1 acts as a motor for the intracellular retrograde motility of vesicles and organelles along microtubules. The intermediate chains mediate the binding of dynein to dynactin via its 150 kDa component (p150-glued) DCTN1. May play a role in mediating the interaction of cytoplasmic dynein with membranous organelles and kinetochores. The chain is Cytoplasmic dynein 1 intermediate chain 1 (DYNC1I1) from Bos taurus (Bovine).